The chain runs to 275 residues: Exosome complex component Rrp42 (275 aa).

The protein belongs to the RNase PH family. Rrp42 subfamily. As to quaternary structure, component of the archaeal exosome complex. Forms a hexameric ring-like arrangement composed of 3 Rrp41-Rrp42 heterodimers. The hexameric ring associates with a trimer of Rrp4 and/or Csl4 subunits.

It localises to the cytoplasm. In terms of biological role, non-catalytic component of the exosome, which is a complex involved in RNA degradation. Contributes to the structuring of the Rrp41 active site. The protein is Exosome complex component Rrp42 of Sulfurisphaera tokodaii (strain DSM 16993 / JCM 10545 / NBRC 100140 / 7) (Sulfolobus tokodaii).